Reading from the N-terminus, the 309-residue chain is Olfactory receptor 5B21 (309 aa).

The Extracellular segment spans residues 1–26; it reads MENSTEVTEFILLGLTDDPNLQIPLL. Asn-3 is a glycosylation site (N-linked (GlcNAc...) asparagine). The chain crosses the membrane as a helical span at residues 27–47; that stretch reads LAFLFIYLITLLGNGGMMVII. The Cytoplasmic portion of the chain corresponds to 48–55; that stretch reads HSDSHLHT. A helical transmembrane segment spans residues 56-76; the sequence is PMYFFLSNLSLVDLGYSSAVA. Over 77–95 the chain is Extracellular; sequence PKTVAALRSGDKAISYDGC. Cys-95 and Cys-177 are oxidised to a cystine. Residues 96–116 traverse the membrane as a helical segment; sequence AAQFFFFVGFATVECYLLASM. Residues 117-137 are Cytoplasmic-facing; that stretch reads AYDRHAAVCRPLHYTTTMTAG. A helical membrane pass occupies residues 138 to 158; sequence VCALLATGSYVSGFLNASIHA. Residues 159–199 lie on the Extracellular side of the membrane; that stretch reads AGTFRLSFCGSNEINHFFCDIPPLLALSCSDTRISKLVVFV. A helical membrane pass occupies residues 200-220; it reads AGFNVFFTLLVILISYFFICI. The Cytoplasmic segment spans residues 221-235; that stretch reads TIQRMHSAEGQKKVF. The helical transmembrane segment at 236–256 threads the bilayer; it reads STCASHLTALSIFYGTIIFMY. Residues 257 to 270 are Extracellular-facing; it reads LQPNSSQSVDTDKI. A glycan (N-linked (GlcNAc...) asparagine) is linked at Asn-260. The chain crosses the membrane as a helical span at residues 271–291; the sequence is ASVFYTVVIPMLNPLIYSLRN. Residues 292 to 309 lie on the Cytoplasmic side of the membrane; it reads KEVKSALWKILNKLYPQY.

Belongs to the G-protein coupled receptor 1 family.

It is found in the cell membrane. Odorant receptor. This Homo sapiens (Human) protein is Olfactory receptor 5B21.